Reading from the N-terminus, the 176-residue chain is Magnesium-dependent phosphatase 1 (176 aa).

Catalysis depends on D11, which acts as the Nucleophile. A Mg(2+)-binding site is contributed by D11. L12 and D13 together coordinate phosphate. Position 13 (D13) interacts with Mg(2+). Catalysis depends on D13, which acts as the Proton donor. W20 contacts substrate. The phosphate site is built by S69, R70, and K100. Residue R70 coordinates substrate. D123 is a Mg(2+) binding site.

The protein belongs to the HAD-like hydrolase superfamily. Requires Mg(2+) as cofactor.

It catalyses the reaction O-phospho-L-tyrosyl-[protein] + H2O = L-tyrosyl-[protein] + phosphate. Inhibited by vanadate and zinc, and slightly by calcium. In terms of biological role, magnesium-dependent phosphatase which may act as a tyrosine phosphatase. The sequence is that of Magnesium-dependent phosphatase 1 (MDP1) from Homo sapiens (Human).